We begin with the raw amino-acid sequence, 469 residues long: Ribosomal protein uS12 methylthiotransferase RimO (469 aa).

The region spanning 1–115 (MKFHIITLGC…IGSVVAGGVA (115 aa)) is the MTTase N-terminal domain. [4Fe-4S] cluster-binding residues include Cys-10, Cys-46, Cys-78, Cys-180, Cys-184, and Cys-187. Residues 166-398 (NKRGPSAYLK…MAVQQVISRA (233 aa)) form the Radical SAM core domain. The TRAM domain occupies 401–469 (ARFVGQTMKV…TDYDLWGEIV (69 aa)).

The protein belongs to the methylthiotransferase family. RimO subfamily. It depends on [4Fe-4S] cluster as a cofactor.

The protein localises to the cytoplasm. It catalyses the reaction L-aspartate(89)-[ribosomal protein uS12]-hydrogen + (sulfur carrier)-SH + AH2 + 2 S-adenosyl-L-methionine = 3-methylsulfanyl-L-aspartate(89)-[ribosomal protein uS12]-hydrogen + (sulfur carrier)-H + 5'-deoxyadenosine + L-methionine + A + S-adenosyl-L-homocysteine + 2 H(+). Catalyzes the methylthiolation of an aspartic acid residue of ribosomal protein uS12. The sequence is that of Ribosomal protein uS12 methylthiotransferase RimO from Herpetosiphon aurantiacus (strain ATCC 23779 / DSM 785 / 114-95).